The following is a 338-amino-acid chain: UbiA prenyltransferase domain-containing protein 1 (338 aa).

Position 2 is an N-acetylalanine (A2). 8 helical membrane-spanning segments follow: residues 83–103 (LLVGCAVAVLAVHGAGNLVNT), 134–154 (FGVFLYTLGCVCAACLYYLSP), 160–180 (LALIYFGGLSGSFLYTGGIGF), 188–208 (LIILITFGPLAVMFAYAIQVG), 209–229 (SLAIFPLVYAIPLALSTEAIL), 245–267 (IVTLAILIGPTFSYILYNTLLFL), 277–297 (THCTISLALPLLTIPMAFSLE), and 315–335 (LNLLLGLFYVFGIILAPAGSL).

Belongs to the UbiA prenyltransferase family. In terms of assembly, interacts with HMGCR and SOAT1. Ubiquitously expressed.

Its subcellular location is the endoplasmic reticulum membrane. The protein resides in the golgi apparatus membrane. It is found in the mitochondrion membrane. The protein localises to the cytoplasm. It localises to the nucleus. It carries out the reaction menadiol + (2E,6E,10E)-geranylgeranyl diphosphate = menaquinol-4 + diphosphate. The enzyme catalyses all-trans-decaprenyl diphosphate + 4-hydroxybenzoate = 4-hydroxy-3-(all-trans-decaprenyl)benzoate + diphosphate. It participates in quinol/quinone metabolism; menaquinone biosynthesis. It functions in the pathway cofactor biosynthesis; ubiquinone biosynthesis. In terms of biological role, prenyltransferase that mediates the formation of menaquinone-4 (MK-4) and coenzyme Q10. MK-4 is a vitamin K2 isoform present at high concentrations in the brain, kidney and pancreas, and is required for endothelial cell development. Mediates the conversion of phylloquinone (PK) into MK-4, probably by cleaving the side chain of phylloquinone (PK) to release 2-methyl-1,4-naphthoquinone (menadione; K3) and then prenylating it with geranylgeranyl pyrophosphate (GGPP) to form MK-4. Also plays a role in cardiovascular development independently of MK-4 biosynthesis, by acting as a coenzyme Q10 biosynthetic enzyme: coenzyme Q10, also named ubiquinone, plays an important antioxidant role in the cardiovascular system. Mediates biosynthesis of coenzyme Q10 in the Golgi membrane, leading to protect cardiovascular tissues from NOS3/eNOS-dependent oxidative stress. The protein is UbiA prenyltransferase domain-containing protein 1 of Homo sapiens (Human).